A 1017-amino-acid polypeptide reads, in one-letter code: Centriole and centriolar satellite protein OFD1 (1017 aa).

The LisH domain maps to 69-101 (LIGASNSLVADHLQRCGYEYSLSVFFPESGLAK). Coiled coils occupy residues 188–557 (PHRS…ENEV) and 626–659 (EFIA…RATQ). A mediates homooligomerization region spans residues 609-666 (PPYVNTATEASSPESDFEFIASSTKAKVRELEQEAERLEKAFRTYYQRATQNPSTSPQ). Disordered regions lie at residues 657–676 (ATQN…SVNS), 685–705 (SSSM…QPLG), 721–749 (GSVV…RSLD), and 769–801 (LDRV…SFSG). A phosphoserine mark is found at Ser664, Ser670, Ser687, Ser722, Ser737, Ser747, Ser791, and Ser823. Over residues 722–740 (SVVSRPRRTSSSTRLSSTP) the composition is skewed to low complexity. Positions 895-966 (ELHMKERRQR…AHCENTLEKY (72 aa)) form a coiled coil. Residues 897 to 988 (HMKERRQREE…ADKSSKKSGK (92 aa)) show a composition bias toward basic and acidic residues. The tract at residues 897–1017 (HMKERRQREE…FSHEEPDDMW (121 aa)) is disordered.

The protein belongs to the OFD1 family. Homooligomer. Interacts with LCA5. Interacts with RUVBL1; the interaction is direct and may mediate interaction with the NuA4 histone acetyltransferase complex. Interacts with SDCCAG8; the interaction is direct. Interacts with MAP1LC3B. Interacts with C2CD3; OFD1 may act as a negative regulator of C2CD3. Forms a complex with KIAA0753/OFIP and CEP20/FOR20; the interaction with CEP20 is detected only in the presence of KIAA0753. Interacts with PCM1; this interaction may be mediated by KIAA0753/OFIP. Interacts with TBC1D31; regulates OFD1 activity in cilium assembly. Post-translationally, phosphorylated. Phosphorylation at Ser-737, by the cAMP-dependent protein kinase PKA, triggers ubiquitination and proteasomal degradation of OFD1. Also increases its interaction with TBC1D31 and regulates its function in ciliogenesis. In terms of processing, ubiquitinated by PJA2, upon phosphorylation at Ser-737 by PKA, leads to the proteasomal degradation of OFD1.

Its subcellular location is the cytoplasm. It is found in the cytoskeleton. The protein resides in the microtubule organizing center. It localises to the centrosome. The protein localises to the centriole. Its subcellular location is the centriolar satellite. It is found in the cilium basal body. The protein resides in the nucleus. In terms of biological role, component of the centrioles controlling mother and daughter centrioles length. Recruits to the centriole IFT88 and centriole distal appendage-specific proteins including CEP164. Involved in the biogenesis of the cilium, a centriole-associated function. The cilium is a cell surface projection found in many vertebrate cells required to transduce signals important for development and tissue homeostasis. Plays an important role in development by regulating Wnt signaling and the specification of the left-right axis. Only OFD1 localized at the centriolar satellites is removed by autophagy, which is an important step in the ciliogenesis regulation. This is Centriole and centriolar satellite protein OFD1 (Ofd1) from Mus musculus (Mouse).